A 94-amino-acid chain; its full sequence is Phosphoribosyl-ATP pyrophosphatase (94 aa).

The protein belongs to the PRA-PH family.

The protein resides in the cytoplasm. It catalyses the reaction 1-(5-phospho-beta-D-ribosyl)-ATP + H2O = 1-(5-phospho-beta-D-ribosyl)-5'-AMP + diphosphate + H(+). Its pathway is amino-acid biosynthesis; L-histidine biosynthesis; L-histidine from 5-phospho-alpha-D-ribose 1-diphosphate: step 2/9. This chain is Phosphoribosyl-ATP pyrophosphatase (hisE), found in Saccharolobus solfataricus (strain ATCC 35092 / DSM 1617 / JCM 11322 / P2) (Sulfolobus solfataricus).